Consider the following 692-residue polypeptide: Hexamerin-1.1 (692 aa).

Positions 1 to 18 (MKLLILAVAISLAVLASG) are cleaved as a signal peptide. The N-linked (GlcNAc...) asparagine glycan is linked to Asn-203.

The protein belongs to the hemocyanin family. Homohexamer. Larval fat body.

The protein resides in the secreted. The protein localises to the extracellular space. Larval storage protein (LSP) which may serve as a store of amino acids for synthesis of adult proteins. The sequence is that of Hexamerin-1.1 (HexA) from Anopheles gambiae (African malaria mosquito).